A 1356-amino-acid polypeptide reads, in one-letter code: Transmembrane protein 94 (1356 aa).

Topologically, residues 1-64 (MDLKEKHLGE…FLHHSNRCSC (64 aa)) are cytoplasmic. A helical transmembrane segment spans residues 65–85 (FHWPGASLMLLAVLLLLGCCG). The Lumenal portion of the chain corresponds to 86 to 92 (GQPAGSR). Residues 93-113 (GVGLVNASALFLLLLLNLVLI) form a helical membrane-spanning segment. At 114-273 (GRQDRLKRRE…RPVTALDNER (160 aa)) the chain is on the cytoplasmic side. Phosphoserine occurs at positions 221 and 225. A helical transmembrane segment spans residues 274 to 294 (FTVQSVMLHYAVPVVLAGFLI). At 295 to 320 (TNALRFIFSAPGVTSWQYTLLQLQVN) the chain is on the lumenal side. The helical transmembrane segment at 321 to 341 (GVLPILPLLFPVLWVLATACG) threads the bilayer. At 342-1092 (EARVLAQMSK…RHATYGIRKC (751 aa)) the chain is on the cytoplasmic side. A DKQGIL motif is present at residues 417–422 (DKQGIL). Disordered stretches follow at residues 439 to 461 (VEPP…FCHP) and 483 to 541 (EQER…ESDP). Over residues 440-449 (EPPHSSHEDL) the composition is skewed to basic and acidic residues. Phosphoserine is present on residues serine 444, serine 445, and serine 454. Residues 502 to 511 (HHKAHGRSKH) are compositionally biased toward basic residues. 4 positions are modified to phosphoserine: serine 513, serine 518, serine 798, and serine 941. Residues 1093 to 1113 (FLFLLQCQLTLVVIQFLSCLV) form a helical membrane-spanning segment. Topologically, residues 1114 to 1120 (QLPPLLS) are lumenal. Residues 1121 to 1141 (TTDILWLSCFCYPLLSISLLG) form a helical membrane-spanning segment. Residues 1142–1167 (KPPHSSIMSMATGKNLQSIPKKTQHY) lie on the Cytoplasmic side of the membrane. Residues 1168 to 1188 (FLLCFLLKFSLTISSCLICFG) form a helical membrane-spanning segment. The Lumenal portion of the chain corresponds to 1189 to 1228 (FTLQSFCDSSRDRNLTNCSSVMLPSNDDRAPAWFEDFANG). N-linked (GlcNAc...) asparagine glycans are attached at residues asparagine 1202 and asparagine 1205. The chain crosses the membrane as a helical span at residues 1229 to 1249 (LLSAQKLTAALIVLHTVFISI). Over 1250-1261 (THVHRTKPLWRK) the chain is Cytoplasmic. The chain crosses the membrane as a helical span at residues 1262–1282 (SPLTNLWWAVTVPVVLLGQVV). The Lumenal segment spans residues 1283–1306 (QTAVDLQLWTHRDSHVHFGLEDVP). Residues 1307–1327 (LLTWLLGCLSLVLVVVTNEIV) form a helical membrane-spanning segment. At 1328–1356 (KLHEIRVRVRYQKRQKLQFETKLGMNSPF) the chain is on the cytoplasmic side. Positions 1351-1353 (GMN) match the GMN; metal-binding motif motif.

Forms homooligomers. Expressed ubiquitously.

Its subcellular location is the endoplasmic reticulum membrane. Functionally, could function in the uptake of Mg(2+) from the cytosol into the endoplasmic reticulum and regulate intracellular Mg(2+) homeostasis. This is Transmembrane protein 94 from Homo sapiens (Human).